A 295-amino-acid polypeptide reads, in one-letter code: Delta-1-pyrroline-5-carboxylate reductase apf3 (295 aa).

Belongs to the pyrroline-5-carboxylate reductase family.

The protein operates within secondary metabolite biosynthesis. In terms of biological role, delta-1-pyrroline-5-carboxylate reductase; part of the gene cluster that mediates the biosynthesis of the cyclic tetrapeptide apicidin F (APF). The non-ribosomal peptide synthetase apf1 incorporates four different amino acids to produce apicidin F: L-phenylalanine, D-pipecolic acid (D-pip), N-methoxy-L-tryptophan and L-2-aminooctanedioic acid. L-Phenylalanine is the only proteinogenic amino acid directly used by apf1. The 3 other apf1 substrates are non-proteinogenic and have to be modified by other enzymes of the cluster. Lysine is converted to delta-1-pyrroline-5-carboxylate (P5C) which is reduced to L-pipecolic acid (L-pip) by apf3. L-pip is epimerized to D-pip, probably by apf1 activity, prior to incorporation. L-Tryptophan is N-oxidyzed by one of the cytochrome P450 monooxygenases (apf7 or apf8), and further methylated at the hydroxy group by the O-methyltransferase apf6 to yield N-methoxy-L-tryptophan. The synthesis of the fourth apf1 substrate is more complex. The fatty acid synthase apf5 is involved in the synthesis of the octanoic acid backbone of L-2-aminooctanedioic acid by fixing one acetyl-CoA unit and three malonyl-CoA units. Then one of the cytochrome P450 monooxygenases (apf7 or apf8) may oxidize this backbone to 2-oxooctanoic acid. The aminotransferase apf4 is predicted to catalyze the exchange of the keto group with an amino group. The next step would be the oxidation of 2-aminooctanoic acid by one of the cytochrome P450 monooxygenases (apf7 or apf8). The last step is the oxidation of 2-amino-8-hydroxyoctanoic acid to 2-aminooctanedioic acid is catalyzed by the FAD-dependent monooxygenase apf9. This chain is Delta-1-pyrroline-5-carboxylate reductase apf3, found in Gibberella fujikuroi (strain CBS 195.34 / IMI 58289 / NRRL A-6831) (Bakanae and foot rot disease fungus).